A 635-amino-acid chain; its full sequence is Transcription termination factor FttA (635 aa).

KHa regions lie at residues 1 to 69 (MSAE…PSVL) and 4 to 69 (EDIL…PSVL). A KHb region spans residues 70–137 (VEPDIAKDKI…WAPKPVRTPP (68 aa)). Metallo-beta-lactamase N-terminus regions lie at residues 179–382 (WVRT…YGGY) and 179–383 (WVRT…GGYD). Beta-Casp regions lie at residues 180–577 (VRTS…GFSG) and 383–576 (DDVL…EGFS). Zn(2+)-binding residues include His241, His243, Asp245, His246, His328, and Asp351. Metallo-beta-lactamase C-terminus regions lie at residues 577–635 (GHSD…IRLR) and 578–635 (HSDR…IRLR). Position 602 (His602) interacts with Zn(2+).

This sequence belongs to the metallo-beta-lactamase superfamily. RNA-metabolizing metallo-beta-lactamase-like family. FttA subfamily. As to quaternary structure, homodimer. Interacts with RNA polymerase (RNAP); interaction is not dependent on DNA or RNA. Interacts with the Spt4-Spt5 complex. The cofactor is Zn(2+).

It is found in the chromosome. Functionally, terminates transcription on the whole genome. Termination is linked to FttA-mediated RNA cleavage and does not require NTP hydrolysis. Cleaves endonucleolytically at the RNA exit channel of RNA polymerase (RNAP); the 5'-3' exonuclease activity of this protein degrades the nascent RNA released from RNAP. In terms of biological role, terminates transcription genome-wide. Transcription termination is most effective in vivo on RNAs with more than one U4-tract in their 3'-ends (including non-protein coding RNAs); U4-tracts are recognized by this protein. Also plays a role in termination of RNAs without U-tracts by an unknown mechanism. Has endonuclease activity after U-rich tracts in transcription termination sites. Binds RNA at U4-tracts found directly upstream of the experimentally determined transcription termination sites; binds preferentially to RNAs with more U4-tracts at their 3'-ends. The protein is Transcription termination factor FttA of Methanococcus maripaludis (strain DSM 14266 / JCM 13030 / NBRC 101832 / S2 / LL).